The primary structure comprises 846 residues: Translation initiation factor IF-2 (846 aa).

The disordered stretch occupies residues 94–263; it reads QRSPEEIQAE…HGFQNPTGPV (170 aa). The segment covering 96–135 has biased composition (basic and acidic residues); that stretch reads SPEEIQAEQKRELDERRAAENAARDKVEAEVRQRNEEQAR. Composition is skewed to low complexity over residues 136 to 148 and 158 to 176; these read RQAA…APAP and AAPV…ASED. Basic and acidic residues-rich tracts occupy residues 177–206 and 230–239; these read AAAR…RGEA and TTDEESDGAR. Basic residues predominate over residues 240 to 253; the sequence is RGRGGKSKLKKRNQ. Positions 346–513 constitute a tr-type G domain; sequence SRAPVVTVMG…AVLLQAEILE (168 aa). Residues 355–362 are G1; the sequence is GHVDHGKT. 355–362 serves as a coordination point for GTP; that stretch reads GHVDHGKT. The G2 stretch occupies residues 380 to 384; the sequence is GITQH. The G3 stretch occupies residues 401-404; that stretch reads DTPG. GTP-binding positions include 401-405 and 455-458; these read DTPGH and NKID. The tract at residues 455–458 is G4; sequence NKID. The segment at 491 to 493 is G5; sequence SAK.

This sequence belongs to the TRAFAC class translation factor GTPase superfamily. Classic translation factor GTPase family. IF-2 subfamily.

The protein resides in the cytoplasm. Its function is as follows. One of the essential components for the initiation of protein synthesis. Protects formylmethionyl-tRNA from spontaneous hydrolysis and promotes its binding to the 30S ribosomal subunits. Also involved in the hydrolysis of GTP during the formation of the 70S ribosomal complex. This Pseudomonas putida (strain ATCC 47054 / DSM 6125 / CFBP 8728 / NCIMB 11950 / KT2440) protein is Translation initiation factor IF-2.